A 206-amino-acid chain; its full sequence is Transmembrane emp24 domain-containing protein bai (206 aa).

Residues 1–20 form the signal peptide; the sequence is MLKVLYVIFTIFGYIWPIYS. Over 21–172 the chain is Lumenal; it reads VMFHLTPNTQ…RDTNEKTNSR (152 aa). The region spanning 30 to 140 is the GOLD domain; it reads QKCLKEDIQA…LKPLEVDLKR (111 aa). Residues 173 to 193 traverse the membrane as a helical segment; that stretch reads VLFFSIFSMCCLLGLATWQVL. The Cytoplasmic segment spans residues 194-206; the sequence is YLRRYFKAKKLIE.

Belongs to the EMP24/GP25L family.

The protein resides in the membrane. Eca and bai are essential, though not redundant, for dorsoventral patterning of the embryo. Specifically required during early embryogenesis for the activity of maternal tkv, while the zygotic tkv is not affected. The protein is Transmembrane emp24 domain-containing protein bai of Drosophila virilis (Fruit fly).